We begin with the raw amino-acid sequence, 364 residues long: Pre-small/secreted glycoprotein (364 aa).

A signal peptide spans 1–32; it reads MGVTGILQLPRDRFKRTSFFLWVIILFQRTFS. Asn-40 carries an N-linked (GlcNAc...) asparagine; by host glycan. Disulfide bonds link Cys-108–Cys-135 and Cys-121–Cys-147. Residues Asn-204, Asn-228, Asn-238, Asn-257, and Asn-268 are each glycosylated (N-linked (GlcNAc...) asparagine; by host).

This sequence belongs to the filoviruses glycoprotein family. Homodimer; disulfide-linked. The homodimers are linked by two disulfide bonds in a parallel orientation. In terms of assembly, monomer. Post-translationally, this precursor is processed into mature sGP and delta-peptide by host furin or furin-like proteases. The cleavage site corresponds to the furin optimal cleavage sequence [KR]-X-[KR]-R. N-glycosylated. In terms of processing, O-glycosylated.

The protein resides in the secreted. Functionally, seems to possess an anti-inflammatory activity as it can reverse the barrier-decreasing effects of TNF alpha. Might therefore contribute to the lack of inflammatory reaction seen during infection in spite the of extensive necrosis and massive virus production. Does not seem to be involved in activation of primary macrophages. Does not seem to interact specifically with neutrophils. Its function is as follows. Viroporin that permeabilizes mammalian cell plasma membranes. It acts by altering permeation of ionic compounds and small molecules. This activity may lead to viral enterotoxic activity. This chain is Pre-small/secreted glycoprotein (GP), found in Zaire ebolavirus (strain Gabon-94) (ZEBOV).